The following is a 381-amino-acid chain: Cytochrome b (381 aa).

4 consecutive transmembrane segments (helical) span residues 34–54 (FGSL…FLAM), 78–99 (WLIR…YLHI), 114–134 (WNIG…GYVL), and 179–199 (FFAF…LHFL). 2 residues coordinate heme b: histidine 84 and histidine 98. The heme b site is built by histidine 183 and histidine 197. Position 202 (histidine 202) interacts with a ubiquinone. The next 4 helical transmembrane spans lie at 227–247 (YKDI…VLFL), 289–309 (LGGV…PFLH), 321–341 (LTQL…WIGG), and 348–368 (FIFI…IITP).

It belongs to the cytochrome b family. In terms of assembly, the cytochrome bc1 complex contains 3 respiratory subunits (MT-CYB, CYC1 and UQCRFS1), 2 core proteins (UQCRC1 and UQCRC2) and probably 6 low-molecular weight proteins. The cofactor is heme b.

The protein localises to the mitochondrion inner membrane. Its function is as follows. Component of the ubiquinol-cytochrome c reductase complex (complex III or cytochrome b-c1 complex) that is part of the mitochondrial respiratory chain. The b-c1 complex mediates electron transfer from ubiquinol to cytochrome c. Contributes to the generation of a proton gradient across the mitochondrial membrane that is then used for ATP synthesis. The chain is Cytochrome b (mt-cyb) from Heterodontus francisci (Horn shark).